Here is a 292-residue protein sequence, read N- to C-terminus: Fat storage-inducing transmembrane protein 1 (292 aa).

At 1-18 (MERGPVVGAGRGAGARIR) the chain is on the lumenal side. Residues 19 to 39 (ALLGGLVRVLLWVASALLYFG) form a helical membrane-spanning segment. The Cytoplasmic portion of the chain corresponds to 40-54 (SEQAARLLGSPCLRR). Residues 55–75 (LYHAWLAAVVIFGPLLQFHVN) form a helical membrane-spanning segment. At 76–94 (PRTIFASHGNFFNIKFVNS) the chain is on the lumenal side. Residues 95 to 115 (AWGWTCTFLGGFVLLVVFLAT) form a helical membrane-spanning segment. The Cytoplasmic portion of the chain corresponds to 116 to 141 (RRVAVTARHLSRLVVGAAVWRGAGRA). A helical membrane pass occupies residues 142-162 (FLLIEDLTGSCFEPLPQGLLL). Topologically, residues 163–187 (HELPDRRSCLAAGHQWRGYTVSSHT) are lumenal. The active site involves His186. The chain crosses the membrane as a helical span at residues 188–208 (FLLTFCCLLMAEEAAVFAKYL). Residues 209–220 (AHGLPAGAPLRL) lie on the Cytoplasmic side of the membrane. A helical membrane pass occupies residues 221–241 (VFLLNVLLLGLWNFLLLCTVI). Residues 242–249 (YFHQYTHK) lie on the Lumenal side of the membrane. The active site involves His244. Residues 250–270 (VVGAAVGTFAWYLTYGSWYHQ) form a helical membrane-spanning segment. Over 271 to 292 (PWSPGSPGHGLFPRPHSIHKHN) the chain is Cytoplasmic.

The protein belongs to the FIT family. FIT1 subfamily.

Its subcellular location is the endoplasmic reticulum membrane. Plays an important role in the formation of lipid droplets (LDs) which are storage organelles at the center of lipid and energy homeostasis. Directly binds to diacylglycerol (DAGs) and triacylglycerol. The protein is Fat storage-inducing transmembrane protein 1 of Bos taurus (Bovine).